A 271-amino-acid polypeptide reads, in one-letter code: Peroxisomal biogenesis factor 2 (271 aa).

Residues 1–2 (MS) are Peroxisomal matrix-facing. Residues 3 to 29 (RVAQLDSIALDKELYGQFWSEFNAAFN) form a helical membrane-spanning segment. Topologically, residues 30–33 (TSEH) are cytoplasmic. A helical membrane pass occupies residues 34-60 (KEEWELALNTVVFMCATRFLPHYGSSC). The Peroxisomal matrix portion of the chain corresponds to 61–77 (TYGSALSGVVFQCRKRT). Residues 78–97 (LYVVTVLAGYVWKKITHIIF) traverse the membrane as a helical segment. Topologically, residues 98–101 (NGPH) are cytoplasmic. The helical transmembrane segment at 102-133 (CGNQMMWLKLYKWVNLLYHGCDVTNFLRFLAA) threads the bilayer. The Peroxisomal matrix segment spans residues 134–175 (EGPNARAFLSPLYRAFNVHSTRLIRDGSAIASEFYSNSVFAG). Residues 176 to 197 (LEYQNRQLLWNALLELFSNTLL) traverse the membrane as a helical segment. Topologically, residues 198–271 (TKRGLLTFVK…SGRLTASPVY (74 aa)) are cytoplasmic. Zn(2+) contacts are provided by cysteine 222, cysteine 225, cysteine 237, cysteine 238, cysteine 243, cysteine 246, cysteine 256, and cysteine 259. An RING-type zinc finger spans residues 222-259 (CPRCGGFPTNPYQIACCRANYCYVCVVKALEWSMCDAC).

This sequence belongs to the pex2/pex10/pex12 family. Component of the PEX2-PEX10-PEX12 retrotranslocation channel, composed of PEX2, PEX10 and PEX12.

It localises to the peroxisome membrane. The catalysed reaction is [E2 ubiquitin-conjugating enzyme]-S-ubiquitinyl-L-cysteine + [acceptor protein]-L-cysteine = [E2 ubiquitin-conjugating enzyme]-L-cysteine + [acceptor protein]-S-ubiquitinyl-L-cysteine.. It participates in protein modification; protein ubiquitination. E3 ubiquitin-protein ligase component of a retrotranslocation channel required for peroxisome organization by mediating export of the PEX5 receptor from peroxisomes to the cytosol, thereby promoting PEX5 recycling. The retrotranslocation channel is composed of PEX2, PEX10 and PEX12; each subunit contributing transmembrane segments that coassemble into an open channel that specifically allows the passage of PEX5 through the peroxisomal membrane. PEX2 also regulates peroxisome organization by acting as a E3 ubiquitin-protein ligase. PEX2 ubiquitinates PEX5 during its passage through the retrotranslocation channel: catalyzes monoubiquitination of PEX5 at 'Cys-6', a modification that acts as a signal for PEX5 extraction into the cytosol. This is Peroxisomal biogenesis factor 2 from Saccharomyces cerevisiae (strain ATCC 204508 / S288c) (Baker's yeast).